We begin with the raw amino-acid sequence, 557 residues long: 2-succinyl-5-enolpyruvyl-6-hydroxy-3-cyclohexene-1-carboxylate synthase (557 aa).

A disordered region spans residues 183-206 (YGGTEHPPVAPPLPPRRAPRAAAP).

It belongs to the TPP enzyme family. MenD subfamily. As to quaternary structure, homodimer. Mg(2+) serves as cofactor. It depends on Mn(2+) as a cofactor. Thiamine diphosphate is required as a cofactor.

The catalysed reaction is isochorismate + 2-oxoglutarate + H(+) = 5-enolpyruvoyl-6-hydroxy-2-succinyl-cyclohex-3-ene-1-carboxylate + CO2. The protein operates within quinol/quinone metabolism; 1,4-dihydroxy-2-naphthoate biosynthesis; 1,4-dihydroxy-2-naphthoate from chorismate: step 2/7. Its pathway is quinol/quinone metabolism; menaquinone biosynthesis. In terms of biological role, catalyzes the thiamine diphosphate-dependent decarboxylation of 2-oxoglutarate and the subsequent addition of the resulting succinic semialdehyde-thiamine pyrophosphate anion to isochorismate to yield 2-succinyl-5-enolpyruvyl-6-hydroxy-3-cyclohexene-1-carboxylate (SEPHCHC). This chain is 2-succinyl-5-enolpyruvyl-6-hydroxy-3-cyclohexene-1-carboxylate synthase, found in Halorhodospira halophila (strain DSM 244 / SL1) (Ectothiorhodospira halophila (strain DSM 244 / SL1)).